The primary structure comprises 365 residues: Aminomethyltransferase (365 aa).

This sequence belongs to the GcvT family. In terms of assembly, the glycine cleavage system is composed of four proteins: P, T, L and H.

The catalysed reaction is N(6)-[(R)-S(8)-aminomethyldihydrolipoyl]-L-lysyl-[protein] + (6S)-5,6,7,8-tetrahydrofolate = N(6)-[(R)-dihydrolipoyl]-L-lysyl-[protein] + (6R)-5,10-methylene-5,6,7,8-tetrahydrofolate + NH4(+). The glycine cleavage system catalyzes the degradation of glycine. In Erwinia tasmaniensis (strain DSM 17950 / CFBP 7177 / CIP 109463 / NCPPB 4357 / Et1/99), this protein is Aminomethyltransferase.